We begin with the raw amino-acid sequence, 242 residues long: Triosephosphate isomerase (242 aa).

9-11 (NWK) provides a ligand contact to substrate. H96 (electrophile) is an active-site residue. E165 (proton acceptor) is an active-site residue. Residues G171, S204, and 225 to 226 (GG) each bind substrate.

This sequence belongs to the triosephosphate isomerase family. Homodimer.

It is found in the cytoplasm. It carries out the reaction D-glyceraldehyde 3-phosphate = dihydroxyacetone phosphate. The protein operates within carbohydrate biosynthesis; gluconeogenesis. Its pathway is carbohydrate degradation; glycolysis; D-glyceraldehyde 3-phosphate from glycerone phosphate: step 1/1. Involved in the gluconeogenesis. Catalyzes stereospecifically the conversion of dihydroxyacetone phosphate (DHAP) to D-glyceraldehyde-3-phosphate (G3P). In Synechocystis sp. (strain ATCC 27184 / PCC 6803 / Kazusa), this protein is Triosephosphate isomerase.